The following is a 225-amino-acid chain: MGRGKIEIKRIENPTNRQVTYSKRRNGIFKKAQELTVLCDAKVSLIMFSNTGKFHEYTSPTITTKKVYDQYQKTLGIDLWSSHYERMQENLRKLKEINNKLRREIRQRMGEDLGDLSIEDLRGLEQKMDASLGLVRERKYHVIKTQTETYRKKVRNLEEQHGNLLLNFEAKCDDPHYGLVENDGDYESAVAFANGASNLYAFRLHQAHPNLHHDGGYGSHDLRLA.

The region spanning 1–61 is the MADS-box domain; the sequence is MGRGKIEIKR…GKFHEYTSPT (61 aa). In terms of domain architecture, K-box spans 84 to 174; it reads YERMQENLRK…LLNFEAKCDD (91 aa).

As to expression, expressed during flower development in stamens, petals and carpels. Expressed in fruits and seeds.

It is found in the nucleus. Its function is as follows. Probable transcription factor involved in flower development. In Vitis vinifera (Grape), this protein is Agamous-like MADS-box protein TM6.